The chain runs to 153 residues: 6,7-dimethyl-8-ribityllumazine synthase (153 aa).

Residues Phe-22, 56–58 (AFE), and 80–82 (AVI) each bind 5-amino-6-(D-ribitylamino)uracil. 85–86 (GT) serves as a coordination point for (2S)-2-hydroxy-3-oxobutyl phosphate. His-88 (proton donor) is an active-site residue. Phe-113 serves as a coordination point for 5-amino-6-(D-ribitylamino)uracil. Arg-127 lines the (2S)-2-hydroxy-3-oxobutyl phosphate pocket.

It belongs to the DMRL synthase family. In terms of assembly, forms an icosahedral capsid composed of 60 subunits, arranged as a dodecamer of pentamers.

It catalyses the reaction (2S)-2-hydroxy-3-oxobutyl phosphate + 5-amino-6-(D-ribitylamino)uracil = 6,7-dimethyl-8-(1-D-ribityl)lumazine + phosphate + 2 H2O + H(+). The protein operates within cofactor biosynthesis; riboflavin biosynthesis; riboflavin from 2-hydroxy-3-oxobutyl phosphate and 5-amino-6-(D-ribitylamino)uracil: step 1/2. Catalyzes the formation of 6,7-dimethyl-8-ribityllumazine by condensation of 5-amino-6-(D-ribitylamino)uracil with 3,4-dihydroxy-2-butanone 4-phosphate. This is the penultimate step in the biosynthesis of riboflavin. This chain is 6,7-dimethyl-8-ribityllumazine synthase, found in Hydrogenovibrio crunogenus (strain DSM 25203 / XCL-2) (Thiomicrospira crunogena).